The chain runs to 515 residues: Cyclic AMP receptor-like protein G (515 aa).

Over 1 to 16 (MSSIIFIPNDADNINS) the chain is Extracellular. Residues 17–37 (IMVTISSSLSLVGCLFILSIY) traverse the membrane as a helical segment. The Cytoplasmic segment spans residues 38-50 (IYYKELREFQLKL). The chain crosses the membrane as a helical span at residues 51-71 (IFIMTINDFIISIIFLIATHI). Residues 72-92 (QTKYFDAITNVFPFFCNFPDS) are Extracellular-facing. Residues 93–113 (LLHYFFLSSFFWEVCIAHTLI) form a helical membrane-spanning segment. Residues 114 to 129 (QVIKYNNDKVEDNLKK) are Cytoplasmic-facing. A helical membrane pass occupies residues 130-150 (YFIFSNGLSALIMVSLFFIRS). At 151-164 (YSKIDCHHDSIFPH) the chain is on the extracellular side. A helical membrane pass occupies residues 165–185 (LLFFIPLLLTWIYNIIVCALL). Over 186 to 276 (TKTFKEQAMN…IRKTPNIIWT (91 aa)) the chain is Cytoplasmic. Residues 277–297 (SIFFLFSFGFIWSWSILVIIL) form a helical membrane-spanning segment. Residues 298–306 (KYLSLDVKY) are Extracellular-facing. A helical membrane pass occupies residues 307 to 327 (ILMISYFFIPLHGCMNAVCFG). At 328–515 (VNDRLRMNLK…FCTIDEDETK (188 aa)) the chain is on the cytoplasmic side. Positions 362 to 375 (NGNNKNNKNNNGAN) are enriched in low complexity. Disordered stretches follow at residues 362 to 409 (NGNN…YYQI) and 469 to 515 (NNNN…DETK). Positions 385–396 (SPDDDDDEDDDN) are enriched in acidic residues. 2 stretches are compositionally biased toward low complexity: residues 397–407 (NNNNYSDGNYY) and 469–504 (NNNN…NNNN).

This sequence belongs to the G-protein coupled receptor 5 family.

It is found in the membrane. Receptor for cAMP. In Dictyostelium discoideum (Social amoeba), this protein is Cyclic AMP receptor-like protein G (crlG).